Here is a 327-residue protein sequence, read N- to C-terminus: ATP-dependent 6-phosphofructokinase (327 aa).

Position 12 (Gly12) interacts with ATP. Residues 22-26 and 55-60 each bind ADP; these read RGVVR and RYSVSD. ATP-binding positions include 73–74 and 103–106; these read RF and GDGS. Mg(2+) is bound at residue Asp104. 127 to 129 is a substrate binding site; it reads TID. Asp129 acts as the Proton acceptor in catalysis. Residue Arg156 coordinates ADP. Substrate is bound by residues Arg164 and 171–173; that span reads MGR. ADP is bound by residues 187-189, Lys213, and 215-217; these read GCE and KKH. Substrate is bound by residues Glu224, Arg245, and 251 to 254; that span reads HIQR.

Belongs to the phosphofructokinase type A (PFKA) family. ATP-dependent PFK group I subfamily. Prokaryotic clade 'B1' sub-subfamily. In terms of assembly, homotetramer. Requires Mg(2+) as cofactor.

It localises to the cytoplasm. It carries out the reaction beta-D-fructose 6-phosphate + ATP = beta-D-fructose 1,6-bisphosphate + ADP + H(+). Its pathway is carbohydrate degradation; glycolysis; D-glyceraldehyde 3-phosphate and glycerone phosphate from D-glucose: step 3/4. With respect to regulation, allosterically activated by ADP and other diphosphonucleosides, and allosterically inhibited by phosphoenolpyruvate. Functionally, catalyzes the phosphorylation of D-fructose 6-phosphate to fructose 1,6-bisphosphate by ATP, the first committing step of glycolysis. This Hamiltonella defensa subsp. Acyrthosiphon pisum (strain 5AT) protein is ATP-dependent 6-phosphofructokinase.